The primary structure comprises 611 residues: Protein spaetzle 3 (611 aa).

Residues 1 to 14 (MALTNFSLPFGALG) form the signal peptide. Asparagine 5 is a glycosylation site (N-linked (GlcNAc...) asparagine). A disordered region spans residues 57–322 (EYFKNNPYAP…NDKSNNNQMP (266 aa)). Composition is skewed to low complexity over residues 104-120 (QQVQQTQQQQTQQQHQQ), 127-153 (SVSFQSSSSRSSSSSTTGQSSIQLTQT), and 169-185 (PGQQAQPPQQQQPQQKQ). Residues 191–210 (GSASATFTKNSGSFSITSFG) show a composition bias toward polar residues. Over residues 218 to 239 (PPQPQQPPPSQQQQPPPAPPPQ) the composition is skewed to pro residues. The span at 288 to 306 (YDVEEGEEDEEEDGEEEGQ) shows a compositional bias: acidic residues. N-linked (GlcNAc...) asparagine glycosylation is found at asparagine 335 and asparagine 351. The tract at residues 477-518 (KKRQAAAGGSRNRGGSAGGSGNGNTNANRQPGNKNGSSGTGR) is disordered. The span at 487–498 (RNRGGSAGGSGN) shows a compositional bias: gly residues. Asparagine 511 carries N-linked (GlcNAc...) asparagine glycosylation. The 89-residue stretch at 521 to 609 (ACESKIEIVT…LFPSCCVCRC (89 aa)) folds into the Spaetzle domain. Intrachain disulfides connect cysteine 522/cysteine 573, cysteine 559/cysteine 605, and cysteine 567/cysteine 607.

Homodimer; disulfide-linked.

In terms of biological role, neurotrophin which may function as a ligand to the Toll-related receptor Tollo. Involved in a Tollo and JNK signaling pathway that positively regulates neuromuscular junction (NMJ) growth in presynaptic motorneurons. May function by activating Tollo to promote the phosphorylation of JNK. The sequence is that of Protein spaetzle 3 from Drosophila melanogaster (Fruit fly).